The primary structure comprises 495 residues: Genome polyprotein (495 aa).

Topologically, residues 1–445 (MRCIGISNRD…LNQVFGTIYG (445 aa)) are extracellular. 4 disulfide bridges follow: C3–C30, C60–C121, C74–C105, and C92–C116. N67 is a glycosylation site (N-linked (GlcNAc...) asparagine; by host). Residues 98–111 (DRGWGNGCGLFGKG) form a fusion peptide region. The N-linked (GlcNAc...) asparagine; by host glycan is linked to N153. 2 disulfides stabilise this stretch: C185/C285 and C302/C333. A helical membrane pass occupies residues 446 to 466 (AAFSGVSWTMKILIGVIITCI). The Cytoplasmic portion of the chain corresponds to 467–472 (GMNSRS). A helical membrane pass occupies residues 473–493 (TSLSVSLVLVGVVTLYLGGMV). Over 494–495 (HA) the chain is Extracellular.

Homodimer; in the endoplasmic reticulum and Golgi. Interacts with protein prM. Interacts with non-structural protein 1. N-glycosylated. In terms of processing, specific enzymatic cleavages in vivo yield mature proteins. Cleavages in the lumen of endoplasmic reticulum are performed by host signal peptidase, wereas cleavages in the cytoplasmic side are performed by serine protease NS3. Signal cleavage at the 2K-4B site requires a prior NS3 protease-mediated cleavage at the 4A-2K site.

The protein localises to the virion membrane. The protein resides in the host endoplasmic reticulum membrane. Binds to host cell surface receptor and mediates fusion between viral and cellular membranes. Envelope protein is synthesized in the endoplasmic reticulum in the form of heterodimer with protein prM. They play a role in virion budding in the ER, and the newly formed immature particle is covered with 60 spikes composed of heterodimer between precursor prM and envelope protein E. The virion is transported to the Golgi apparatus where the low pH causes dissociation of PrM-E heterodimers and formation of E homodimers. prM-E cleavage is inefficient, and many virions are only partially matured. These uncleaved prM would play a role in immune evasion. In Aedes aegypti (Yellowfever mosquito), this protein is Genome polyprotein.